A 244-amino-acid polypeptide reads, in one-letter code: Small ribosomal subunit protein uS2 (244 aa).

Belongs to the universal ribosomal protein uS2 family.

The chain is Small ribosomal subunit protein uS2 from Endomicrobium trichonymphae.